We begin with the raw amino-acid sequence, 505 residues long: Maturase K (505 aa).

It belongs to the intron maturase 2 family. MatK subfamily.

It is found in the plastid. The protein localises to the chloroplast. Its function is as follows. Usually encoded in the trnK tRNA gene intron. Probably assists in splicing its own and other chloroplast group II introns. The sequence is that of Maturase K from Barclaya longifolia (Orchid lily).